Here is a 278-residue protein sequence, read N- to C-terminus: SLAM family member 8 (278 aa).

The first 20 residues, 1 to 20 (MWSLWSLLLFEALLPVVVVS), serve as a signal peptide directing secretion. The Extracellular segment spans residues 21-231 (VQVLSKVGDS…AASGKASYKD (211 aa)). Residues asparagine 83 and asparagine 154 are each glycosylated (N-linked (GlcNAc...) asparagine). The Ig-like C2-type domain occupies 126 to 213 (PEVQVFTAAA…PVSWDMTTVT (88 aa)). Cysteine 150 and cysteine 199 are oxidised to a cystine. A helical transmembrane segment spans residues 232 to 252 (VLLVVVPITLFLILAGLFGAW). Over 253 to 278 (HHGLCSGKKKDACTDGVLPETENALV) the chain is Cytoplasmic.

The protein resides in the membrane. In terms of biological role, may play a role in B-lineage commitment and/or modulation of signaling through the B-cell receptor. This chain is SLAM family member 8 (Slamf8), found in Mus musculus (Mouse).